A 67-amino-acid polypeptide reads, in one-letter code: Large ribosomal subunit protein uL29 (67 aa).

Belongs to the universal ribosomal protein uL29 family.

This is Large ribosomal subunit protein uL29 from Gemmatimonas aurantiaca (strain DSM 14586 / JCM 11422 / NBRC 100505 / T-27).